The chain runs to 283 residues: Putative 4-diphosphocytidyl-2-C-methyl-D-erythritol kinase (283 aa).

K11 is a catalytic residue. Residue 95 to 105 (PVCAGMGGGSS) participates in ATP binding. D137 is a catalytic residue.

Belongs to the GHMP kinase family. IspE subfamily.

It carries out the reaction 4-CDP-2-C-methyl-D-erythritol + ATP = 4-CDP-2-C-methyl-D-erythritol 2-phosphate + ADP + H(+). In terms of biological role, catalyzes the phosphorylation of the position 2 hydroxy group of 4-diphosphocytidyl-2C-methyl-D-erythritol. The polypeptide is Putative 4-diphosphocytidyl-2-C-methyl-D-erythritol kinase (Streptococcus equi subsp. equi (strain 4047)).